The primary structure comprises 258 residues: Imidazole glycerol phosphate synthase subunit HisF (258 aa).

Catalysis depends on residues Asp-11 and Asp-130.

It belongs to the HisA/HisF family. As to quaternary structure, heterodimer of HisH and HisF.

The protein resides in the cytoplasm. The enzyme catalyses 5-[(5-phospho-1-deoxy-D-ribulos-1-ylimino)methylamino]-1-(5-phospho-beta-D-ribosyl)imidazole-4-carboxamide + L-glutamine = D-erythro-1-(imidazol-4-yl)glycerol 3-phosphate + 5-amino-1-(5-phospho-beta-D-ribosyl)imidazole-4-carboxamide + L-glutamate + H(+). It participates in amino-acid biosynthesis; L-histidine biosynthesis; L-histidine from 5-phospho-alpha-D-ribose 1-diphosphate: step 5/9. IGPS catalyzes the conversion of PRFAR and glutamine to IGP, AICAR and glutamate. The HisF subunit catalyzes the cyclization activity that produces IGP and AICAR from PRFAR using the ammonia provided by the HisH subunit. This Serratia proteamaculans (strain 568) protein is Imidazole glycerol phosphate synthase subunit HisF.